The primary structure comprises 388 residues: Protein FAM199X (388 aa).

Positions 288-312 (SMVSSASSSGSSVGNSASNSSANMS) are enriched in low complexity. Residues 288-358 (SMVSSASSSG…QLKEQRQARK (71 aa)) are disordered. A phosphoserine mark is found at serine 316 and serine 321. Over residues 330–349 (DSKKRSKQRKLQQKAFRKRQ) the composition is skewed to basic residues.

It belongs to the FAM199 family.

In Mus musculus (Mouse), this protein is Protein FAM199X (Fam199x).